The following is a 288-amino-acid chain: 4-hydroxybenzoate octaprenyltransferase (288 aa).

The next 6 helical transmembrane spans lie at 33–53 (LWALWVASPGVPPLWILAVFV), 99–119 (LFIVLVLLSFLLVLTLNTMTI), 163–183 (ESLPLSCWLMFLANILWAVAY), 213–233 (LIIGILQVAVLALMGAVGWLN), 234–254 (GLGWEYYWSLFVAAGLFGWQQ), and 268–288 (AFMNNNYVGLVLFLGLAMSYL).

It belongs to the UbiA prenyltransferase family. It depends on Mg(2+) as a cofactor.

It localises to the cell inner membrane. The catalysed reaction is all-trans-octaprenyl diphosphate + 4-hydroxybenzoate = 4-hydroxy-3-(all-trans-octaprenyl)benzoate + diphosphate. It participates in cofactor biosynthesis; ubiquinone biosynthesis. Functionally, catalyzes the prenylation of para-hydroxybenzoate (PHB) with an all-trans polyprenyl group. Mediates the second step in the final reaction sequence of ubiquinone-8 (UQ-8) biosynthesis, which is the condensation of the polyisoprenoid side chain with PHB, generating the first membrane-bound Q intermediate 3-octaprenyl-4-hydroxybenzoate. In Klebsiella pneumoniae subsp. pneumoniae (strain ATCC 700721 / MGH 78578), this protein is 4-hydroxybenzoate octaprenyltransferase.